The primary structure comprises 268 residues: tRNA pseudouridine synthase A (268 aa).

Residue Asp54 is the Nucleophile of the active site. Tyr112 contributes to the substrate binding site.

It belongs to the tRNA pseudouridine synthase TruA family. As to quaternary structure, homodimer.

The catalysed reaction is uridine(38/39/40) in tRNA = pseudouridine(38/39/40) in tRNA. Functionally, formation of pseudouridine at positions 38, 39 and 40 in the anticodon stem and loop of transfer RNAs. The sequence is that of tRNA pseudouridine synthase A from Bordetella petrii (strain ATCC BAA-461 / DSM 12804 / CCUG 43448).